The following is a 345-amino-acid chain: Ephrin-B1 (345 aa).

The N-terminal stretch at 1 to 24 (MARPGQRWLSKWLVAMVVLTLCRL) is a signal peptide. At 25-236 (ATPLAKNLEP…GDSDSFFNSK (212 aa)) the chain is on the extracellular side. The Ephrin RBD domain maps to 30 to 164 (KNLEPVSWSS…TRTMKIVMKV (135 aa)). Cystine bridges form between Cys64-Cys101 and Cys89-Cys153. N-linked (GlcNAc...) asparagine glycosylation is present at Asn139. A disordered region spans residues 169 to 227 (NAVTPEQLTTSRPSKESDNTVKTATQAPGRGSQGDSDGKHETVNQEEKSGPGAGGGGSG). Residues 204–217 (SDGKHETVNQEEKS) are compositionally biased toward basic and acidic residues. The helical transmembrane segment at 237–257 (VALFAAVGAGCVIFLLIIIFL) threads the bilayer. The Cytoplasmic portion of the chain corresponds to 258–345 (TVLLLKLRKR…QSPANIYYKV (88 aa)). The short motif at 259-272 (VLLLKLRKRHRKHT) is the Nuclear localization signal element. The tract at residues 262–293 (LKLRKRHRKHTQQRAAALSLSTLASPKGGSGT) is interaction with ZHX2. Ser280 and Ser286 each carry phosphoserine. The short motif at 343 to 345 (YKV) is the PDZ-binding element.

This sequence belongs to the ephrin family. In terms of assembly, interacts (via PDZ-binding motif) with GRIP1 and GRIP2 (via PDZ domain 6). Interacts with TLE1. The intracellular domain peptide interacts with ZHX2; the interaction enhances ZHX2 transcriptional repression activity. Post-translationally, inducible phosphorylation of tyrosine residues in the cytoplasmic domain. Proteolytically processed. The ectodomain is cleaved, probably by a metalloprotease, to produce a membrane-tethered C-terminal fragment. This fragment is then further processed by the gamma-secretase complex to yield a soluble intracellular domain peptide which can translocate to the nucleus. The intracellular domain peptide is highly labile suggesting that it is targeted for degradation by the proteasome. Expressed on lateral floor plate cells, specifically on commissural axon segments that have passed through the floor plate. Expressed in cells of the retinal ganglion cell layer during retinal axon guidance to the optic disk. Expressed in myogenic progenitor cells.

The protein localises to the cell membrane. The protein resides in the membrane raft. Its subcellular location is the nucleus. Functionally, cell surface transmembrane ligand for Eph receptors, a family of receptor tyrosine kinases which are crucial for migration, repulsion and adhesion during neuronal, vascular and epithelial development. Binding to Eph receptors residing on adjacent cells leads to contact-dependent bidirectional signaling into neighboring cells. Shows high affinity for the receptor tyrosine kinase EPHB1/ELK. Can also bind EPHB2 and EPHB3. Binds to, and induces the collapse of, commissural axons/growth cones in vitro. May play a role in constraining the orientation of longitudinally projecting axons. In Mus musculus (Mouse), this protein is Ephrin-B1 (Efnb1).